Consider the following 200-residue polypeptide: NADH-quinone oxidoreductase subunit C (200 aa).

This sequence belongs to the complex I 30 kDa subunit family. In terms of assembly, NDH-1 is composed of 14 different subunits. Subunits NuoB, C, D, E, F, and G constitute the peripheral sector of the complex.

It is found in the cell inner membrane. It carries out the reaction a quinone + NADH + 5 H(+)(in) = a quinol + NAD(+) + 4 H(+)(out). Functionally, NDH-1 shuttles electrons from NADH, via FMN and iron-sulfur (Fe-S) centers, to quinones in the respiratory chain. The immediate electron acceptor for the enzyme in this species is believed to be ubiquinone. Couples the redox reaction to proton translocation (for every two electrons transferred, four hydrogen ions are translocated across the cytoplasmic membrane), and thus conserves the redox energy in a proton gradient. The sequence is that of NADH-quinone oxidoreductase subunit C from Burkholderia mallei (strain NCTC 10247).